The sequence spans 239 residues: MGRKWNNIKDKKASKDANTSRIYAKFGREIYVAAKQGEPDPESNQALRVVLERAKTYNVPRTIIDRAVEKAKGGSEENYDELRYEGFGPNGAMVIVDTLTNNVNRTAADVRAAFSKNSGNMGVNGSVAYMFDATAVIGLEGKTSDEVLEILMEADVDARDILEEEDSVIVYAEPDQFHSVQSALKGAGVEEFTVAELTMLAQSDVTLPEDAQVQFEKMVDALEDLEDVQQVYHNVDLGE.

It belongs to the TACO1 family. YeeN subfamily.

The protein resides in the cytoplasm. The sequence is that of Probable transcriptional regulatory protein BCG9842_B4761 from Bacillus cereus (strain G9842).